A 311-amino-acid chain; its full sequence is Cell division protein ZipA (311 aa).

Residues 1-5 are Periplasmic-facing; that stretch reads MQELR. A helical transmembrane segment spans residues 6-26; sequence FVLIVVGALAIMALLFHGLWT. Topologically, residues 27–311 are cytoplasmic; it reads SKKEGKAKFG…QIVEFKAANA (285 aa). Basic and acidic residues predominate over residues 32–54; the sequence is KAKFGDKPLSKLDLGESEPKESE. The interval 32 to 60 is disordered; it reads KAKFGDKPLSKLDLGESEPKESEMYVAPE.

This sequence belongs to the ZipA family. As to quaternary structure, interacts with FtsZ via their C-terminal domains.

It is found in the cell inner membrane. Essential cell division protein that stabilizes the FtsZ protofilaments by cross-linking them and that serves as a cytoplasmic membrane anchor for the Z ring. Also required for the recruitment to the septal ring of downstream cell division proteins. This Vibrio vulnificus (strain CMCP6) protein is Cell division protein ZipA.